We begin with the raw amino-acid sequence, 274 residues long: Thiamine kinase (274 aa).

This sequence belongs to the thiamine kinase family.

It catalyses the reaction thiamine + ATP = thiamine phosphate + ADP + H(+). Its pathway is cofactor biosynthesis; thiamine diphosphate biosynthesis; thiamine phosphate from thiamine: step 1/1. In terms of biological role, catalyzes the ATP-dependent phosphorylation of thiamine to thiamine phosphate. Is involved in thiamine salvage. This chain is Thiamine kinase, found in Salmonella typhimurium (strain LT2 / SGSC1412 / ATCC 700720).